A 280-amino-acid chain; its full sequence is Myelin proteolipid protein A (280 aa).

Topologically, residues methionine 1–cysteine 10 are cytoplasmic. S-palmitoyl cysteine attachment occurs at residues cysteine 7 and cysteine 10. Residues methionine 11 to glycine 36 form a helical membrane-spanning segment. The Extracellular portion of the chain corresponds to histidine 37–glutamate 59. Residues tyrosine 60 to alanine 88 form a helical membrane-spanning segment. Topologically, residues glutamate 89 to lysine 152 are cytoplasmic. S-palmitoyl cysteine attachment occurs at residues cysteine 140 and cysteine 142. The helical transmembrane segment at phenylalanine 153 to phenylalanine 179 threads the bilayer. The Extracellular segment spans residues asparagine 180–histidine 239. 2 disulfide bridges follow: cysteine 185-cysteine 229 and cysteine 202-cysteine 221. Residues leucine 240–leucine 269 traverse the membrane as a helical segment. Topologically, residues arginine 270–phenylalanine 280 are cytoplasmic.

Belongs to the myelin proteolipid protein family.

The protein localises to the cell membrane. Functionally, this is the major myelin protein from the central nervous system. It plays an important role in the formation or maintenance of the multilamellar structure of myelin. The sequence is that of Myelin proteolipid protein A (plp1-a) from Xenopus laevis (African clawed frog).